The primary structure comprises 252 residues: Probable transcriptional regulatory protein Haur_3030 (252 aa).

The protein belongs to the TACO1 family.

The protein resides in the cytoplasm. This Herpetosiphon aurantiacus (strain ATCC 23779 / DSM 785 / 114-95) protein is Probable transcriptional regulatory protein Haur_3030.